Reading from the N-terminus, the 362-residue chain is Cobalt-precorrin-5B C(1)-methyltransferase (362 aa).

This sequence belongs to the CbiD family.

It catalyses the reaction Co-precorrin-5B + S-adenosyl-L-methionine = Co-precorrin-6A + S-adenosyl-L-homocysteine. It participates in cofactor biosynthesis; adenosylcobalamin biosynthesis; cob(II)yrinate a,c-diamide from sirohydrochlorin (anaerobic route): step 6/10. Functionally, catalyzes the methylation of C-1 in cobalt-precorrin-5B to form cobalt-precorrin-6A. In Burkholderia lata (strain ATCC 17760 / DSM 23089 / LMG 22485 / NCIMB 9086 / R18194 / 383), this protein is Cobalt-precorrin-5B C(1)-methyltransferase.